The sequence spans 700 residues: Pyrroloquinoline quinone transporter (700 aa).

The N-terminal stretch at 1 to 23 is a signal peptide; sequence MKIFSVRQTVLPALLVLSPVVFA. One can recognise a TBDR plug domain in the interval 39–157; the sequence is SELDTPAAVS…SGGVMNVTTQ (119 aa). Transmembrane regions (beta stranded) follow at residues 132 to 136, 150 to 160, 162 to 171, 177 to 186, 195 to 204, 220 to 227, 233 to 241, 280 to 288, 295 to 301, 335 to 344, 350 to 358, 398 to 405, 411 to 419, 447 to 456, 464 to 468, 500 to 509, 511 to 520, 549 to 556, 563 to 570, 597 to 604, 611 to 617, 637 to 647, 651 to 659, and 689 to 697; these read NVEVL, GVMNVTTQTGQ, PPTIEASSYY, WRYGLKATGA, DVDYTVSTTR, LANAKLGV, SKLSLIFNS, QAGLRYERS, MSVMMYA, GIDSRWTHRG, VTFTTGLNY, DPYLQTQW, LSLDAGVRY, WLPAGSLKYA, YLAAG, TIEIGSKTRI, DGLLSLALFQ, GAELAWDQ, RVNASWTW, MGFASIGY, YAGTEAR, LVGLFTGYKYN, LTVDLFGRV, and YGVGMNIAW. In terms of domain architecture, TBDR beta-barrel spans 162-697; the sequence is PPTIEASSYY…NYGVGMNIAW (536 aa). The short motif at 680-700 is the TonB C-terminal box element; that stretch reads YYEPSPGRNYGVGMNIAWRFE.

Belongs to the TonB-dependent receptor family.

The protein localises to the cell outer membrane. Mediates the TonB-dependent high affinity transport across the outer membrane of pyrroloquinoline quinone (PQQ), a redox cofactor required for the activity of Gcd and Asd dehydrogenases. The uptake process is energised via the TonB-ExbBD complex. Not involved in the transport of an iron-containing substrate under laboratory conditions. This chain is Pyrroloquinoline quinone transporter, found in Escherichia coli (strain K12).